A 984-amino-acid polypeptide reads, in one-letter code: UPF0592 protein YDL073W (984 aa).

A disordered region spans residues 675–712 (KNHKIMDGYEGGQENEDNDEDSEDSGSHKNKRKEGNSS). The span at 687–698 (QENEDNDEDSED) shows a compositional bias: acidic residues.

The protein belongs to the UPF0592 family.

This chain is UPF0592 protein YDL073W, found in Saccharomyces cerevisiae (strain ATCC 204508 / S288c) (Baker's yeast).